The following is a 410-amino-acid chain: Arginine deiminase (410 aa).

Cysteine 399 serves as the catalytic Amidino-cysteine intermediate.

This sequence belongs to the arginine deiminase family.

It is found in the cytoplasm. It catalyses the reaction L-arginine + H2O = L-citrulline + NH4(+). It functions in the pathway amino-acid degradation; L-arginine degradation via ADI pathway; carbamoyl phosphate from L-arginine: step 1/2. In Listeria monocytogenes serotype 4b (strain F2365), this protein is Arginine deiminase.